A 372-amino-acid polypeptide reads, in one-letter code: Type II methyltransferase M1.HphI (372 aa).

The region spanning 45–372 (LTYIDLFSGA…EAVLKMNTNE (328 aa)) is the SAM-dependent MTase C5-type domain. C122 is a catalytic residue.

It belongs to the class I-like SAM-binding methyltransferase superfamily. C5-methyltransferase family.

It carries out the reaction a 2'-deoxycytidine in DNA + S-adenosyl-L-methionine = a 5-methyl-2'-deoxycytidine in DNA + S-adenosyl-L-homocysteine + H(+). A methylase that recognizes the double-stranded sequence 5'-GGTGA-3' and protects the DNA from cleavage by the HphI endonuclease. Probably methylates C-2 on the bottom strand. This is Type II methyltransferase M1.HphI (hphIAM) from Haemophilus parahaemolyticus.